Reading from the N-terminus, the 296-residue chain is Lipoyl synthase (296 aa).

[4Fe-4S] cluster is bound by residues cysteine 38, cysteine 43, cysteine 49, cysteine 64, cysteine 68, cysteine 71, and serine 279. One can recognise a Radical SAM core domain in the interval 50-268; the sequence is WDGGCLTFMV…AEYGRSLGFK (219 aa).

It belongs to the radical SAM superfamily. Lipoyl synthase family. Requires [4Fe-4S] cluster as cofactor.

It is found in the cytoplasm. It catalyses the reaction [[Fe-S] cluster scaffold protein carrying a second [4Fe-4S](2+) cluster] + N(6)-octanoyl-L-lysyl-[protein] + 2 oxidized [2Fe-2S]-[ferredoxin] + 2 S-adenosyl-L-methionine + 4 H(+) = [[Fe-S] cluster scaffold protein] + N(6)-[(R)-dihydrolipoyl]-L-lysyl-[protein] + 4 Fe(3+) + 2 hydrogen sulfide + 2 5'-deoxyadenosine + 2 L-methionine + 2 reduced [2Fe-2S]-[ferredoxin]. It functions in the pathway protein modification; protein lipoylation via endogenous pathway; protein N(6)-(lipoyl)lysine from octanoyl-[acyl-carrier-protein]: step 2/2. In terms of biological role, catalyzes the radical-mediated insertion of two sulfur atoms into the C-6 and C-8 positions of the octanoyl moiety bound to the lipoyl domains of lipoate-dependent enzymes, thereby converting the octanoylated domains into lipoylated derivatives. The protein is Lipoyl synthase of Methanocella arvoryzae (strain DSM 22066 / NBRC 105507 / MRE50).